Reading from the N-terminus, the 294-residue chain is Acetylglutamate kinase (294 aa).

Substrate is bound by residues 63–64 (GG), arginine 85, and asparagine 188.

The protein belongs to the acetylglutamate kinase family. ArgB subfamily.

It localises to the cytoplasm. It catalyses the reaction N-acetyl-L-glutamate + ATP = N-acetyl-L-glutamyl 5-phosphate + ADP. Its pathway is amino-acid biosynthesis; L-arginine biosynthesis; N(2)-acetyl-L-ornithine from L-glutamate: step 2/4. Its function is as follows. Catalyzes the ATP-dependent phosphorylation of N-acetyl-L-glutamate. This Methanococcus maripaludis (strain C7 / ATCC BAA-1331) protein is Acetylglutamate kinase.